Consider the following 502-residue polypeptide: Glutamate--tRNA ligase (502 aa).

Residues 9–19 carry the 'HIGH' region motif; it reads PSPTGFPHVGT. Residues 250-254 carry the 'KMSKS' region motif; that stretch reads KLSKR. Lys-253 is a binding site for ATP.

Belongs to the class-I aminoacyl-tRNA synthetase family. Glutamate--tRNA ligase type 1 subfamily. As to quaternary structure, monomer.

The protein resides in the cytoplasm. It carries out the reaction tRNA(Glu) + L-glutamate + ATP = L-glutamyl-tRNA(Glu) + AMP + diphosphate. Functionally, catalyzes the attachment of glutamate to tRNA(Glu) in a two-step reaction: glutamate is first activated by ATP to form Glu-AMP and then transferred to the acceptor end of tRNA(Glu). The polypeptide is Glutamate--tRNA ligase (Acinetobacter baumannii (strain SDF)).